We begin with the raw amino-acid sequence, 187 residues long: Ubiquinol-cytochrome c reductase iron-sulfur subunit (187 aa).

Residues 15–35 (LYYATAGAGAVATGAAVWPLI) traverse the membrane as a helical segment. Residues 89-185 (QLGQLVDTNA…AKFIDETTIQ (97 aa)) form the Rieske domain. Residues C129, H131, C149, and H152 each contribute to the [2Fe-2S] cluster site. C134 and C151 are disulfide-bonded.

This sequence belongs to the Rieske iron-sulfur protein family. In terms of assembly, the main subunits of complex b-c1 are: cytochrome b, cytochrome c1 and the Rieske protein. [2Fe-2S] cluster serves as cofactor.

Its subcellular location is the cell membrane. It catalyses the reaction a quinol + 2 Fe(III)-[cytochrome c](out) = a quinone + 2 Fe(II)-[cytochrome c](out) + 2 H(+)(out). Its function is as follows. Component of the ubiquinol-cytochrome c reductase complex (complex III or cytochrome b-c1 complex), which is a respiratory chain that generates an electrochemical potential coupled to ATP synthesis. In Cereibacter sphaeroides (Rhodobacter sphaeroides), this protein is Ubiquinol-cytochrome c reductase iron-sulfur subunit (petA).